A 204-amino-acid polypeptide reads, in one-letter code: Allatotropin (204 aa).

An N-terminal signal peptide occupies residues 1-20 (MNLTMQLAVIVAVCLCLAEG). The propeptide occupies 21–35 (APDVRLTRTKQQRPT). The tract at residues 47–83 (RGFGKRDRPHPRAERDVDHQAPSARPNRGTPTFKSPT) is disordered. F49 bears the Phenylalanine amide mark. Positions 50 to 65 (GKRDRPHPRAERDVDH) are enriched in basic and acidic residues. A propeptide spanning residues 53–204 (DRPHPRAERD…LSSEELLRNF (152 aa)) is cleaved from the precursor.

As to expression, expressed extensively in the brain, frontal ganglion and terminal ganglion of the day 2 fifth instar larva (at protein level). Not expressed in the larval brain after day 4 of the fifth instar, or in the brain of the pupa or adult. Expression in the terminal ganglion is localized to cells in the posterior portion of the seventh neuromere of day 2 fifth instar larvae. In the pupa and adult expression is detected in the medial region of neuromere 6, the dorsal medial region of neuromere 7, and the posterior neuromere of the terminal ganglion (at protein level). In the frontal ganglion expression decreases in the wandering larvae and is present at low levels in during pupal ecdysis, but is not detected in the adult. Expressed in the subesophageal ganglion of day 2 fifth instar larva, but not at any time before or after day 2. Not expressed in the abdominal ganglia 1-6 of the day 2 fifth instar larva (at protein level). Expressed in the anterior neuromeres of the pterothoracic ganglion in pupa but not in adult (at protein level). Expressed in the unfused abdominal ganglia of day 10 pupae, and in pharate adult is expressed in median neurosecretory cells M1, M2 and M5, but not in median neurosecretory cells M3 and M4 (at protein level). Not expressed in the differentiated median neurosecretory cells M5 of the larva (at protein level). In the pharate adult brain isoform 3 is the predominant form, with lower levels of isoform 2 and very low levels of isoform 1 detected. In the pharate adult nerve cord isoform 3 is the predominant form, with lower levels of isoform 2 and no isoform 1 detected. In the pharate adult frontal ganglion isoform 3 is expressed, but not isoform 1 and isoform 2.

Its subcellular location is the secreted. In terms of biological role, neuropeptide stimulator of juvenile hormone synthesis. Cardioregulatory neurohormone that increases heart beat rate in the adult but not in the larva. Inhibits active ion transport in the midgut of feeding fourth instar and day 2 fifth instar larva, but not in the midgut of pharate or wandering fifth instar larva. This chain is Allatotropin, found in Manduca sexta (Tobacco hawkmoth).